The chain runs to 126 residues: Aspartate 1-decarboxylase (126 aa).

S25 functions as the Schiff-base intermediate with substrate; via pyruvic acid in the catalytic mechanism. S25 bears the Pyruvic acid (Ser) mark. T57 is a binding site for substrate. The active-site Proton donor is Y58. A substrate-binding site is contributed by 73 to 75 (GSA).

This sequence belongs to the PanD family. As to quaternary structure, heterooctamer of four alpha and four beta subunits. Pyruvate is required as a cofactor. In terms of processing, is synthesized initially as an inactive proenzyme, which is activated by self-cleavage at a specific serine bond to produce a beta-subunit with a hydroxyl group at its C-terminus and an alpha-subunit with a pyruvoyl group at its N-terminus.

It is found in the cytoplasm. The enzyme catalyses L-aspartate + H(+) = beta-alanine + CO2. It functions in the pathway cofactor biosynthesis; (R)-pantothenate biosynthesis; beta-alanine from L-aspartate: step 1/1. Functionally, catalyzes the pyruvoyl-dependent decarboxylation of aspartate to produce beta-alanine. This chain is Aspartate 1-decarboxylase, found in Chromobacterium violaceum (strain ATCC 12472 / DSM 30191 / JCM 1249 / CCUG 213 / NBRC 12614 / NCIMB 9131 / NCTC 9757 / MK).